We begin with the raw amino-acid sequence, 599 residues long: MNNPLVNQAAMVLPVFLLSACLGGGGSFDLDSVETVQDMHSKPKYEDEKSQPESQQDVSENSGAAYGFAVKLPRRNAHFNPKYKEKHKPLGSMDWKKLQRGEPNSFSERDELEKKRGSSELIESKWEDGQSRVVGYTNFTYVRSGYVYLNKNNIDIKNNIVLFGPDGYLYYKGKEPSKELPSEKITYKGTWDYVTDAMEKQRFEGLGSAAGGDKSGALSALEEGVLRNQAEASSGHTDFGMTSEFEVDFSDKTIKGTLYRNNRITQNNSENKQIKTTRYTIQATLHGNRFKGKALAADKGATNGSHPFISDSDSLEGGFYGPKGEELAGKFLSNDNKVAAVFGAKQKDKKDGENAAGPATETVIDAYRITGEEFKKEQIDSFGDVKKLLVDGVELSLLPSEGNKAAFQHEIEQNGVKATVCCSNLDYMSFGKLSKENKDDMFLQGVRTPVSDVAARTEANAKYRGTWYGYIANGTSWSGEASNQEGGNRAEFDVDFSTKKISGTLTAKDRTSPAFTITAMIKDNGFSGVAKTGENGFALDPQNTGNSHYTHIEATVSGGFYGKNAIEMGGSFSFPGNAPEGKQEKASVVFGAKRQQLVQ.

Positions 1 to 20 (MNNPLVNQAAMVLPVFLLSA) are cleaved as a signal peptide. A lipid anchor (N-palmitoyl cysteine) is attached at cysteine 21. The S-diacylglycerol cysteine moiety is linked to residue cysteine 21. Residues 39 to 51 (MHSKPKYEDEKSQ) are compositionally biased toward basic and acidic residues. 2 disordered regions span residues 39–61 (MHSK…VSEN) and 80–119 (NPKY…RGSS). A compositionally biased stretch (polar residues) spans 52–61 (PESQQDVSEN). Residues 107–119 (SERDELEKKRGSS) are compositionally biased toward basic and acidic residues.

This sequence belongs to the TbpB family. Isotype I subfamily. As to quaternary structure, binds only human holo-transferrin (TF), via the TF C-terminus. Forms a large complex with TF and TbpA. Interacts via its C-terminal domain with Slam1.

It localises to the cell outer membrane. Its subcellular location is the cell surface. Its function is as follows. Neisseria acquires iron by extracting it from serum transferrin (TF) in its human host. Acts as a TF receptor and is required for TF utilization. Involved in the initial capture of TF. Helps select only those TF molecules that can be used as an iron source and concentrates them on the cell surface, maintaining the iron-loaded status of the TF C-terminal lobe until its delivery to TbpA. In Neisseria meningitidis serogroup B, this protein is Transferrin-binding protein B (tbpB).